The chain runs to 239 residues: Methylthioribulose-1-phosphate dehydratase (239 aa).

Cys94 contacts substrate. The Zn(2+) site is built by His112 and His114. The Proton donor/acceptor role is filled by Glu136. Position 192 (His192) interacts with Zn(2+).

The protein belongs to the aldolase class II family. MtnB subfamily. Zn(2+) is required as a cofactor.

It is found in the cytoplasm. The catalysed reaction is 5-(methylsulfanyl)-D-ribulose 1-phosphate = 5-methylsulfanyl-2,3-dioxopentyl phosphate + H2O. Its pathway is amino-acid biosynthesis; L-methionine biosynthesis via salvage pathway; L-methionine from S-methyl-5-thio-alpha-D-ribose 1-phosphate: step 2/6. Its function is as follows. Catalyzes the dehydration of methylthioribulose-1-phosphate (MTRu-1-P) into 2,3-diketo-5-methylthiopentyl-1-phosphate (DK-MTP-1-P). Functions in the methionine salvage pathway. May play a role in apoptosis. The sequence is that of Methylthioribulose-1-phosphate dehydratase from Xenopus tropicalis (Western clawed frog).